Here is a 356-residue protein sequence, read N- to C-terminus: uncharacterized protein (356 aa).

37-44 (TGASSGIG) serves as a coordination point for NADP(+). S168 serves as a coordination point for substrate. The active-site Proton acceptor is the Y181.

Belongs to the short-chain dehydrogenases/reductases (SDR) family.

This is an uncharacterized protein from Bacillus subtilis (strain 168).